Consider the following 472-residue polypeptide: Chromosomal replication initiator protein DnaA (472 aa).

Residues 1–73 (MSNMEHDRWS…LTCWQAELPE (73 aa)) form a domain I, interacts with DnaA modulators region. The interval 73 to 128 (EVCRIDLTVRSPMRAAVAKEAAAPVEHRRAEHRPATETRSHATVPASSNHDALGGS) is domain II. A disordered region spans residues 92–127 (EAAAPVEHRRAEHRPATETRSHATVPASSNHDALGG). Over residues 97–112 (VEHRRAEHRPATETRS) the composition is skewed to basic and acidic residues. A domain III, AAA+ region region spans residues 129-351 (PLDPRLTFAS…GAINRLLAHS (223 aa)). 4 residues coordinate ATP: Gly176, Gly178, Lys179, and Thr180. A domain IV, binds dsDNA region spans residues 352 to 472 (KLNAQPVTLE…VDSLKRQLQE (121 aa)).

Belongs to the DnaA family. As to quaternary structure, oligomerizes as a right-handed, spiral filament on DNA at oriC.

The protein resides in the cytoplasm. Plays an essential role in the initiation and regulation of chromosomal replication. ATP-DnaA binds to the origin of replication (oriC) to initiate formation of the DNA replication initiation complex once per cell cycle. Binds the DnaA box (a 9 base pair repeat at the origin) and separates the double-stranded (ds)DNA. Forms a right-handed helical filament on oriC DNA; dsDNA binds to the exterior of the filament while single-stranded (ss)DNA is stabiized in the filament's interior. The ATP-DnaA-oriC complex binds and stabilizes one strand of the AT-rich DNA unwinding element (DUE), permitting loading of DNA polymerase. After initiation quickly degrades to an ADP-DnaA complex that is not apt for DNA replication. Binds acidic phospholipids. The polypeptide is Chromosomal replication initiator protein DnaA (Rhodopseudomonas palustris (strain HaA2)).